We begin with the raw amino-acid sequence, 401 residues long: MKAVGIIVEYNPFHNGHLYHLEETKKQTGADCIIAVMSGNFLQRGEPALVSKWARTKMALSAGVDIVIELPYAFAVQSAEQFASGAVTLLHSLFCEEICFGSENGNITAFIDAAKTFLEQKQQHDSYVQEALQEGVSYPRANAEAWKRLNATNLDLSKPNNVLGLAYVKAILQKQIPITPRTIRRIASDYHDKTFSHPSIASATSLRKALKGSLAHLETIAPYIPGTTKQTLEQYYDTYGMFHEWEAYFPFLKYRIMTAEEAELRQIAGVDEGIEHRLKQEIVAAPTFSAFMNSIKTKRYTWTRLQRICTHILTNFTKDQRKKTETPTYIRLLGMSSNGRRYLQHVKKHLPLPLVTKVSNLKHDPIYQQEKKASFAYAAIFPEPARTNVLKEEYATPPLLQ.

ATP is bound by residues 7–20 (IVEY…HLYH), Gly101, Asn160, and 185–186 (RI).

Belongs to the TmcAL family.

It is found in the cytoplasm. The catalysed reaction is cytidine(34) in elongator tRNA(Met) + acetate + ATP = N(4)-acetylcytidine(34) in elongator tRNA(Met) + AMP + diphosphate. Its function is as follows. Catalyzes the formation of N(4)-acetylcytidine (ac(4)C) at the wobble position of elongator tRNA(Met), using acetate and ATP as substrates. First activates an acetate ion to form acetyladenylate (Ac-AMP) and then transfers the acetyl group to tRNA to form ac(4)C34. The protein is tRNA(Met) cytidine acetate ligase of Geobacillus sp. (strain WCH70).